Reading from the N-terminus, the 428-residue chain is 3-phosphoshikimate 1-carboxyvinyltransferase (428 aa).

3-phosphoshikimate contacts are provided by K22, S23, and R27. A phosphoenolpyruvate-binding site is contributed by K22. 2 residues coordinate phosphoenolpyruvate: G96 and R124. 3-phosphoshikimate-binding residues include S170, S171, Q172, S198, D314, N337, and K341. Q172 serves as a coordination point for phosphoenolpyruvate. The active-site Proton acceptor is the D314. Phosphoenolpyruvate contacts are provided by R345, R387, and K412.

This sequence belongs to the EPSP synthase family. Monomer.

It localises to the cytoplasm. The enzyme catalyses 3-phosphoshikimate + phosphoenolpyruvate = 5-O-(1-carboxyvinyl)-3-phosphoshikimate + phosphate. It functions in the pathway metabolic intermediate biosynthesis; chorismate biosynthesis; chorismate from D-erythrose 4-phosphate and phosphoenolpyruvate: step 6/7. Its function is as follows. Catalyzes the transfer of the enolpyruvyl moiety of phosphoenolpyruvate (PEP) to the 5-hydroxyl of shikimate-3-phosphate (S3P) to produce enolpyruvyl shikimate-3-phosphate and inorganic phosphate. This is 3-phosphoshikimate 1-carboxyvinyltransferase from Vibrio vulnificus (strain YJ016).